A 636-amino-acid chain; its full sequence is Iron transport multicopper oxidase FET3 (636 aa).

An N-terminal signal peptide occupies residues 1-21 (MTNALLSIAVLLFSMLSLAQA). At 22 to 559 (ETHTFNWTTG…AFIPTGFTKK (538 aa)) the chain is on the extracellular side. Residues Asn27, Asn74, and Asn77 are each glycosylated (N-linked (GlcNAc...) asparagine). Plastocyanin-like domains follow at residues 32–146 (WDYR…IKDD) and 157–301 (SLSL…VYNK). 2 residues coordinate Cu cation: His81 and His83. N-linked (GlcNAc...) asparagine glycans are attached at residues Asn88 and Asn113. Cu cation is bound by residues His126 and His128. Asn194, Asn198, Asn244, Asn265, Asn292, Asn300, Asn359, and Asn381 each carry an N-linked (GlcNAc...) asparagine glycan. One can recognise a Plastocyanin-like 3 domain in the interval 362 to 502 (YTAPKVPTLM…GLGLVLVEDP (141 aa)). His413, His416, His418, His483, Cys484, His485, and His489 together coordinate Cu cation. Residues 560 to 584 (GIIAMTFSCFAGILGIITIAIYGMM) traverse the membrane as a helical segment. Residues 585–636 (DMEDATEKVIRDLHVDPEVLLNEVDENEERQVNEDRHSTEKHQFLTKAKRFF) lie on the Cytoplasmic side of the membrane.

The protein belongs to the multicopper oxidase family. Cu cation serves as cofactor.

Its subcellular location is the cell membrane. It catalyses the reaction 4 Fe(2+) + O2 + 4 H(+) = 4 Fe(3+) + 2 H2O. The catalysed reaction is 4 Cu(+) + O2 + 4 H(+) = 4 Cu(2+) + 2 H2O. In terms of biological role, iron transport multicopper ferroxidase required for Fe(2+) ion high affinity uptake. Required to oxidize Fe(2+) to Fe(3+), which is then transported into the cell via the ferric iron permease FTR1. Essential component of copper-dependent iron transport. Also has cuprous oxidase activity. This chain is Iron transport multicopper oxidase FET3 (FET3), found in Saccharomyces cerevisiae (strain ATCC 204508 / S288c) (Baker's yeast).